We begin with the raw amino-acid sequence, 360 residues long: Outer membrane protein P2 (360 aa).

Residues 1-20 form the signal peptide; that stretch reads MKKTLAALIVGAFAASAANA.

The protein belongs to the Gram-negative porin family. Homotrimer.

It localises to the cell outer membrane. Functionally, forms pores that allow passive diffusion of small molecules across the outer membrane. In Haemophilus influenzae, this protein is Outer membrane protein P2 (ompP2).